The primary structure comprises 533 residues: 2-isopropylmalate synthase (533 aa).

A Pyruvate carboxyltransferase domain is found at 8 to 270 (VIIFDTTLRD…YFNPFLGRPA (263 aa)). Residues Asp-17, His-209, His-211, and Asn-245 each contribute to the Mn(2+) site. Positions 409 to 533 (RLELVQVSCG…KEKTPEMLQV (125 aa)) are regulatory domain.

This sequence belongs to the alpha-IPM synthase/homocitrate synthase family. LeuA type 1 subfamily. In terms of assembly, homodimer. It depends on Mn(2+) as a cofactor.

Its subcellular location is the cytoplasm. The enzyme catalyses 3-methyl-2-oxobutanoate + acetyl-CoA + H2O = (2S)-2-isopropylmalate + CoA + H(+). It participates in amino-acid biosynthesis; L-leucine biosynthesis; L-leucine from 3-methyl-2-oxobutanoate: step 1/4. In terms of biological role, catalyzes the condensation of the acetyl group of acetyl-CoA with 3-methyl-2-oxobutanoate (2-ketoisovalerate) to form 3-carboxy-3-hydroxy-4-methylpentanoate (2-isopropylmalate). This is 2-isopropylmalate synthase from Microcystis aeruginosa.